Consider the following 299-residue polypeptide: Bifunctional protein FolD (299 aa).

Residues 168–170 (GRS), Ser-193, and Ile-234 contribute to the NADP(+) site.

This sequence belongs to the tetrahydrofolate dehydrogenase/cyclohydrolase family. As to quaternary structure, homodimer.

The catalysed reaction is (6R)-5,10-methylene-5,6,7,8-tetrahydrofolate + NADP(+) = (6R)-5,10-methenyltetrahydrofolate + NADPH. It catalyses the reaction (6R)-5,10-methenyltetrahydrofolate + H2O = (6R)-10-formyltetrahydrofolate + H(+). The protein operates within one-carbon metabolism; tetrahydrofolate interconversion. Functionally, catalyzes the oxidation of 5,10-methylenetetrahydrofolate to 5,10-methenyltetrahydrofolate and then the hydrolysis of 5,10-methenyltetrahydrofolate to 10-formyltetrahydrofolate. This Bartonella tribocorum (strain CIP 105476 / IBS 506) protein is Bifunctional protein FolD.